The sequence spans 296 residues: Mycothiol acetyltransferase (296 aa).

2 consecutive N-acetyltransferase domains span residues 1-148 and 151-296; these read MTEW…IRVD and VTVR…YGRA. Residue glutamate 34 coordinates 1D-myo-inositol 2-(L-cysteinylamino)-2-deoxy-alpha-D-glucopyranoside. Acetyl-CoA contacts are provided by residues 79 to 81 and 87 to 92; these read LVV and RRGIGS. Residues glutamate 178, lysine 219, and glutamate 229 each contribute to the 1D-myo-inositol 2-(L-cysteinylamino)-2-deoxy-alpha-D-glucopyranoside site. Residues 233 to 235 and 240 to 246 contribute to the acetyl-CoA site; these read VGV and QGRGLGH. A 1D-myo-inositol 2-(L-cysteinylamino)-2-deoxy-alpha-D-glucopyranoside-binding site is contributed by tyrosine 267. Residue 272-277 coordinates acetyl-CoA; the sequence is NQAALR.

It belongs to the acetyltransferase family. MshD subfamily. In terms of assembly, monomer.

It carries out the reaction 1D-myo-inositol 2-(L-cysteinylamino)-2-deoxy-alpha-D-glucopyranoside + acetyl-CoA = mycothiol + CoA + H(+). Its function is as follows. Catalyzes the transfer of acetyl from acetyl-CoA to desacetylmycothiol (Cys-GlcN-Ins) to form mycothiol. In Mycobacteroides abscessus (strain ATCC 19977 / DSM 44196 / CCUG 20993 / CIP 104536 / JCM 13569 / NCTC 13031 / TMC 1543 / L948) (Mycobacterium abscessus), this protein is Mycothiol acetyltransferase.